We begin with the raw amino-acid sequence, 487 residues long: Lysophospholipid acyltransferase 5 (487 aa).

At alanine 2 the chain carries N-acetylalanine. The next 4 helical transmembrane spans lie at 44–64 (LIFS…YLFY), 84–104 (FNFG…FLIL), 111–131 (VTAV…GYYY), and 180–200 (GVPS…FLVG). A glycan (N-linked (GlcNAc...) asparagine) is linked at asparagine 225. 2 helical membrane passes run 236–256 (LGLV…DDYL) and 285–305 (VTCW…FNGF). Residues asparagine 308 and asparagine 331 are each glycosylated (N-linked (GlcNAc...) asparagine). Active-site residues include asparagine 338 and histidine 374. The next 3 helical transmembrane spans lie at 364 to 384 (GLSL…LICF), 422 to 442 (LVQQ…FCLF), and 453 to 473 (SIYF…PYIH). The Di-lysine motif signature appears at 484-487 (KKRE).

It belongs to the membrane-bound acyltransferase family. As to expression, detected ubiquitously, with high expression levels in small intestine, brown adipose tissue, liver, kidney and testis. Expressed in liver and both proximal and distal small intestine (at protein level). Expressed in peritoneal macrophages.

It is found in the endoplasmic reticulum membrane. It carries out the reaction a 1-acyl-sn-glycero-3-phosphocholine + an acyl-CoA = a 1,2-diacyl-sn-glycero-3-phosphocholine + CoA. The catalysed reaction is a 1-acyl-sn-glycero-3-phosphoethanolamine + an acyl-CoA = a 1,2-diacyl-sn-glycero-3-phosphoethanolamine + CoA. The enzyme catalyses a 1-acyl-sn-glycero-3-phospho-L-serine + an acyl-CoA = a 1,2-diacyl-sn-glycero-3-phospho-L-serine + CoA. It catalyses the reaction (9Z,12Z)-octadecadienoyl-CoA + a 1-acyl-sn-glycero-3-phosphocholine = 1-acyl-2-(9Z,12Z)-octadecadienoyl-sn-glycero-3-phosphocholine + CoA. It carries out the reaction (5Z,8Z,11Z,14Z)-eicosatetraenoyl-CoA + a 1-acyl-sn-glycero-3-phosphocholine = 1-acyl-2-(5Z,8Z,11Z,14Z-eicosatetraenoyl)-sn-glycero-3-phosphocholine + CoA. The catalysed reaction is dodecanoyl-CoA + 1-hexadecanoyl-sn-glycero-3-phosphocholine = 1-hexadecanoyl-2-dodecanoyl-sn-glycero-3-phosphocholine + CoA. The enzyme catalyses octadecanoyl-CoA + 1-hexadecanoyl-sn-glycero-3-phosphocholine = 1-hexadecanoyl-2-octadecanoyl-sn-glycero-3-phosphocholine + CoA. It catalyses the reaction 1-dodecanoyl-sn-glycero-3-phosphocholine + hexadecanoyl-CoA = 1-dodecanoyl-2-hexadecanoyl-sn-glycero-3-phosphocholine + CoA. It carries out the reaction 1-tetradecanoyl-sn-glycero-3-phosphocholine + hexadecanoyl-CoA = 1-tetradecanoyl-2-hexadecanoyl-sn-glycero-3-phosphocholine + CoA. The catalysed reaction is 1-hexadecanoyl-sn-glycero-3-phosphocholine + hexadecanoyl-CoA = 1,2-dihexadecanoyl-sn-glycero-3-phosphocholine + CoA. The enzyme catalyses 1-octadecanoyl-sn-glycero-3-phosphocholine + hexadecanoyl-CoA = 1-octadecanoyl-2-hexadecanoyl-sn-glycero-3-phosphocholine + CoA. It catalyses the reaction 1-(9Z-octadecenoyl)-sn-glycero-3-phosphocholine + hexadecanoyl-CoA = 1-(9Z-octadecenoyl)-2-hexadecanoyl-sn-glycero-3-phosphocholine + CoA. It carries out the reaction (9Z)-hexadecenoyl-CoA + 1-hexadecanoyl-sn-glycero-3-phosphocholine = 1-hexadecanoyl-2-(9Z-hexadecenoyl)-sn-glycero-3-phosphocholine + CoA. The catalysed reaction is 1-hexadecanoyl-sn-glycero-3-phosphocholine + (9Z)-octadecenoyl-CoA = 1-hexadecanoyl-2-(9Z-octadecenoyl)-sn-glycero-3-phosphocholine + CoA. The enzyme catalyses (9Z,12Z)-octadecadienoyl-CoA + 1-hexadecanoyl-sn-glycero-3-phosphocholine = 1-hexadecanoyl-2-(9Z,12Z-octadecadienoyl)-sn-glycero-3-phosphocholine + CoA. It catalyses the reaction 1-dodecanoyl-sn-glycero-3-phosphocholine + (5Z,8Z,11Z,14Z)-eicosatetraenoyl-CoA = 1-dodecanoyl-2-(5Z,8Z,11Z,14Z)-eicosatetraenoyl-sn-glycero-3-phosphocholine + CoA. It carries out the reaction (5Z,8Z,11Z,14Z)-eicosatetraenoyl-CoA + 1-hexadecanoyl-sn-glycero-3-phosphocholine = 1-hexadecanoyl-2-(5Z,8Z,11Z,14Z-eicosatetraenoyl)-sn-glycero-3-phosphocholine + CoA. The catalysed reaction is 1-octadecanoyl-sn-glycero-3-phosphocholine + (5Z,8Z,11Z,14Z)-eicosatetraenoyl-CoA = 1-octadecanoyl-2-(5Z,8Z,11Z,14Z-eicosatetraenoyl)-sn-glycero-3-phosphocholine + CoA. The enzyme catalyses 1-eicosanoyl-sn-glycero-3-phosphocholine + (5Z,8Z,11Z,14Z)-eicosatetraenoyl-CoA = 1-eicosanoyl-2-(5Z,8Z,11Z,14Z)-eicosatetraenoyl-sn-glycero-3-phosphocholine + CoA. It catalyses the reaction 1-(9Z-octadecenoyl)-sn-glycero-3-phosphocholine + (9Z)-octadecenoyl-CoA = 1,2-di-(9Z-octadecenoyl)-sn-glycero-3-phosphocholine + CoA. It carries out the reaction 1-(9Z-octadecenoyl)-sn-glycero-3-phosphocholine + (9Z,12Z)-octadecadienoyl-CoA = 1-(9Z)-octadecenoyl-2-(9Z,12Z)-octadecadienoyl-sn-glycero-3-phosphocholine + CoA. The catalysed reaction is 1-(9Z-octadecenoyl)-sn-glycero-3-phosphocholine + (5Z,8Z,11Z,14Z)-eicosatetraenoyl-CoA = 1-(9Z)-octadecenoyl-2-(5Z,8Z,11Z,14Z)-icosatetraenoyl-sn-glycero-3-phosphocholine + CoA. The enzyme catalyses a 1-acyl-sn-glycero-3-phosphoethanolamine + (9Z,12Z)-octadecadienoyl-CoA = 1-acyl-2-(9Z,12Z)-octadecadienoyl-sn-glycero-3-phosphoethanolamine + CoA. It catalyses the reaction 1-(9Z-octadecenoyl)-sn-glycero-3-phosphoethanolamine + (9Z,12Z)-octadecadienoyl-CoA = 1-(9Z)-octadecenoyl-2-(9Z,12Z)-octadecadienoyl-sn-glycero-3-phosphoethanolamine + CoA. It carries out the reaction 1-(10Z-heptadecenoyl)-sn-glycero-3-phosphoethanolamine + (9Z,12Z)-octadecadienoyl-CoA = 1-(10Z-heptadecenoyl)-2-(9Z,12Z-octadecadienoyl)-sn-glycero-3-phosphoethanolamine + CoA. The catalysed reaction is a 1-acyl-sn-glycero-3-phosphoethanolamine + (5Z,8Z,11Z,14Z)-eicosatetraenoyl-CoA = 1-acyl-2-(5Z,8Z,11Z,14Z)-eicosatetraenoyl-sn-glycero-3-phosphoethanolamine + CoA. The enzyme catalyses 1-hexadecanoyl-sn-glycero-3-phosphoethanolamine + (5Z,8Z,11Z,14Z)-eicosatetraenoyl-CoA = 1-hexadecanoyl-2-(5Z,8Z,11Z,14Z-eicosatetraenoyl)-sn-glycero-3-phosphoethanolamine + CoA. It catalyses the reaction 1-(9Z-octadecenoyl)-sn-glycero-3-phosphoethanolamine + (5Z,8Z,11Z,14Z)-eicosatetraenoyl-CoA = 1-(9Z)-octadecenoyl-2-(5Z,8Z,11Z,14Z)-eicosatetraenoyl-sn-glycero-3-phosphoethanolamine + CoA. It carries out the reaction 1-(10Z-heptadecenoyl)-sn-glycero-3-phosphoethanolamine + (5Z,8Z,11Z,14Z)-eicosatetraenoyl-CoA = 1-(10Z-heptadecenoyl)-2-(5Z,8Z,11Z,14Z-eicosatetraenoyl)-sn-glycero-3-phosphoethanolamine + CoA. The catalysed reaction is a 1-O-(1Z-alkenyl)-sn-glycero-3-phosphoethanolamine + (5Z,8Z,11Z,14Z)-eicosatetraenoyl-CoA = 1-O-(1Z)-alkenyl-2-(5Z,8Z,11Z,14Z)-eicosatetraenoyl-sn-glycero-3-phosphoethanolamine + CoA. The enzyme catalyses a 1-acyl-sn-glycero-3-phospho-L-serine + (9Z,12Z)-octadecadienoyl-CoA = 1-acyl-2-(9Z,12Z-octadecadienoyl)-sn-glycero-3-phospho-L-serine + CoA. It catalyses the reaction a 1-acyl-sn-glycero-3-phospho-L-serine + (5Z,8Z,11Z,14Z)-eicosatetraenoyl-CoA = 1-acyl-2-(5Z,8Z,11Z,14Z-eicosatetraenoyl)-sn-glycero-3-phospho-L-serine + CoA. It carries out the reaction 1-hexadecanoyl-sn-glycero-3-phospho-L-serine + (9Z)-octadecenoyl-CoA = 1-hexadecanoyl-2-(9Z-octadecenoyl)-sn-glycero-3-phospho-L-serine + CoA. The catalysed reaction is 1-(9Z-octadecenoyl)-sn-glycero-3-phospho-L-serine + (9Z)-octadecenoyl-CoA = 1,2-di-(9Z)-octadecenoyl-sn-glycero-3-phospho-L-serine + CoA. The enzyme catalyses 1-hexadecanoyl-sn-glycero-3-phospho-L-serine + (9Z,12Z)-octadecadienoyl-CoA = 1-hexadecanoyl-2-(9Z,12Z-octadecadienoyl)-sn-glycero-3-phospho-L-serine + CoA. It catalyses the reaction 1-(9Z-octadecenoyl)-sn-glycero-3-phospho-L-serine + (9Z,12Z)-octadecadienoyl-CoA = 1-(9Z-octadecenoyl)-2-(9Z,12Z-octadienoyl)-sn-glycero-3-phospho-L-serine + CoA. It carries out the reaction 1-hexadecanoyl-sn-glycero-3-phospho-L-serine + (5Z,8Z,11Z,14Z)-eicosatetraenoyl-CoA = 1-hexadecanoyl-2-(5Z,8Z,11Z,14Z-eicosatetraenoyl)-sn-glycero-3-phospho-L-serine + CoA. The catalysed reaction is 1-(9Z-octadecenoyl)-sn-glycero-3-phospho-L-serine + (5Z,8Z,11Z,14Z)-eicosatetraenoyl-CoA = 1-(9Z-octadecenoyl)-2-(5Z,8Z,11Z,14Z-eicosatetraenoyl)-sn-glycero-3-phospho-L-serine + CoA. It functions in the pathway lipid metabolism; phospholipid metabolism. Its function is as follows. Lysophospholipid O-acyltransferase (LPLAT) that catalyzes the reacylation step of the phospholipid remodeling process also known as the Lands cycle. Catalyzes transfer of the fatty acyl chain from fatty acyl-CoA to 1-acyl lysophospholipid to form various classes of phospholipids. Converts 1-acyl lysophosphatidylcholine (LPC) into phosphatidylcholine (PC) (LPCAT activity), 1-acyl lysophosphatidylserine (LPS) into phosphatidylserine (PS) (LPSAT activity) and 1-acyl lysophosphatidylethanolamine (LPE) into phosphatidylethanolamine (PE) (LPEAT activity). Favors polyunsaturated fatty acyl-CoAs as acyl donors compared to saturated fatty acyl-CoAs. Has higher activity for LPC acyl acceptors compared to LPEs and LPSs. Can also transfer the fatty acyl chain from fatty acyl-CoA to 1-O-alkyl lysophospholipid or 1-O-alkenyl lysophospholipid with lower efficiency. Acts as a major LPC O-acyltransferase in liver and intestine. As a component of the liver X receptor/NR1H3 or NR1H2 signaling pathway, mainly catalyzes the incorporation of arachidonate into PCs of endoplasmic reticulum (ER) membranes, increasing membrane dynamics and enabling triacylglycerols transfer to nascent very low-density lipoprotein (VLDL) particles. Promotes processing of sterol regulatory protein SREBF1 in hepatocytes, likely by facilitating the translocation of SREBF1-SCAP complex from ER to the Golgi apparatus. Participates in mechanisms by which the liver X receptor/NR1H3 or NR1H2 signaling pathway counteracts lipid-induced ER stress response and inflammation. Down-regulates hepatic inflammation by limiting arachidonic acid availability for synthesis of inflammatory eicosanoids, such as prostaglandins. In enterocytes, acts as a component of a gut-brain feedback loop that coordinates dietary lipid absorption and food intake. Regulates the abundance of PCs containing linoleate and arachidonate in enterocyte membranes, enabling passive diffusion of fatty acids and cholesterol across the membrane for efficient chylomicron assembly. In the intestinal crypt, acts as a component of dietary-responsive phospholipid-cholesterol axis, regulating the biosynthesis of cholesterol and its mitogenic effects on intestinal stem cells. The polypeptide is Lysophospholipid acyltransferase 5 (Lpcat3) (Mus musculus (Mouse)).